A 402-amino-acid polypeptide reads, in one-letter code: Guanine nucleotide-binding protein subunit alpha-1 (402 aa).

Over residues 1–12 (MGCSASKPSEPS) the composition is skewed to polar residues. The tract at residues 1–70 (MGCSASKPSE…PEPQKPAEPA (70 aa)) is disordered. Gly-2 is lipidated: N-myristoyl glycine. Residue Cys-3 is the site of S-palmitoyl cysteine attachment. Positions 23-33 (KKVEQVPEPKP) are enriched in basic and acidic residues. A compositionally biased stretch (pro residues) spans 34-69 (EPQPQPEPQPQPEPPKPAEPAPAPAPAPEPQKPAEP). Residues 82 to 402 (EAYGLLLCGA…FISDKYYQDA (321 aa)) form the G-alpha domain. Residues 85–98 (GLLLCGAGESGKTT) are G1 motif. GTP-binding residues include Glu-93, Ser-94, Gly-95, Lys-96, Thr-97, Thr-98, Asp-198, Leu-223, Ser-229, Gly-251, Asn-317, Lys-318, Asp-320, and Ala-377. Thr-97 provides a ligand contact to Mg(2+). Residues 221–229 (DVLRARIRS) form a G2 motif region. A Mg(2+)-binding site is contributed by Ser-229. Residues 244–253 (IRIFDVGGQK) are G3 motif. Residues 313 to 320 (FLVCNKFD) form a G4 motif region. Residues 375–380 (IVALNG) form a G5 motif region.

This sequence belongs to the G-alpha family. In terms of assembly, g proteins are composed of 3 units; alpha, beta and gamma. The alpha chain contains the guanine nucleotide binding site. Mg(2+) is required as a cofactor.

It localises to the cytoplasm. The protein resides in the perinuclear region. Its subcellular location is the endomembrane system. Its function is as follows. Guanine nucleotide-binding proteins (G proteins) are involved as modulators or transducers in various transmembrane signaling systems. This is Guanine nucleotide-binding protein subunit alpha-1 (GA1) from Trichomonas vaginalis.